We begin with the raw amino-acid sequence, 109 residues long: U26-theraphotoxin-Cg1a (109 aa).

A signal peptide spans 1 to 18; it reads MNTIIPLLLLSLLITVYA. Residues 19–67 constitute a propeptide that is removed on maturation; it reads YALEDGNKEEIQDIAESEFEASNEMLQLAHLLEADRAETEEDRNSRQKR. 3 cysteine pairs are disulfide-bonded: C68/C83, C75/C88, and C82/C103.

Belongs to the neurotoxin 14 (magi-1) family. 07 (Jztx-56) subfamily. In terms of tissue distribution, expressed by the venom gland.

The protein resides in the secreted. Functionally, probable ion channel inhibitor. The protein is U26-theraphotoxin-Cg1a of Chilobrachys guangxiensis (Chinese earth tiger tarantula).